A 479-amino-acid chain; its full sequence is UDP-glycosyltransferase 85A5 (479 aa).

UDP-alpha-D-glucose contacts are provided by residues Ser-301, 358–360, 375–383, and 397–400; these read CPQ, HSGWNSTLE, and FAEQ.

The protein belongs to the UDP-glycosyltransferase family. As to expression, expressed in roots, shoots and leaves.

The protein is UDP-glycosyltransferase 85A5 (UGT85A5) of Arabidopsis thaliana (Mouse-ear cress).